The sequence spans 410 residues: Shaggy-related protein kinase epsilon (410 aa).

At Ala-2 the chain carries N-acetylalanine. Residues 74–358 (YMAERIVGQG…AMEAIVHPFF (285 aa)) enclose the Protein kinase domain. Residues 80–88 (VGQGSFGIV) and Lys-103 each bind ATP. Asp-199 serves as the catalytic Proton acceptor. Tyr-234 is subject to Phosphotyrosine.

It belongs to the protein kinase superfamily. CMGC Ser/Thr protein kinase family. GSK-3 subfamily. As to quaternary structure, binds to KIB1. Autophosphorylated mainly on threonine and serine residues.

The enzyme catalyses L-seryl-[protein] + ATP = O-phospho-L-seryl-[protein] + ADP + H(+). It catalyses the reaction L-threonyl-[protein] + ATP = O-phospho-L-threonyl-[protein] + ADP + H(+). Its function is as follows. May mediate extracellular signals to regulate transcription in differentiating cells. This Arabidopsis thaliana (Mouse-ear cress) protein is Shaggy-related protein kinase epsilon (ASK5).